We begin with the raw amino-acid sequence, 157 residues long: 2-C-methyl-D-erythritol 2,4-cyclodiphosphate synthase (157 aa).

Residues Asp8 and His10 each coordinate a divalent metal cation. Residues 8–10 (DVH) and 34–35 (HS) contribute to the 4-CDP-2-C-methyl-D-erythritol 2-phosphate site. His42 lines the a divalent metal cation pocket. 4-CDP-2-C-methyl-D-erythritol 2-phosphate contacts are provided by residues 56 to 58 (DIG), 132 to 135 (TTNE), and Arg142.

The protein belongs to the IspF family. In terms of assembly, homotrimer. A divalent metal cation is required as a cofactor.

It catalyses the reaction 4-CDP-2-C-methyl-D-erythritol 2-phosphate = 2-C-methyl-D-erythritol 2,4-cyclic diphosphate + CMP. It participates in isoprenoid biosynthesis; isopentenyl diphosphate biosynthesis via DXP pathway; isopentenyl diphosphate from 1-deoxy-D-xylulose 5-phosphate: step 4/6. Involved in the biosynthesis of isopentenyl diphosphate (IPP) and dimethylallyl diphosphate (DMAPP), two major building blocks of isoprenoid compounds. Catalyzes the conversion of 4-diphosphocytidyl-2-C-methyl-D-erythritol 2-phosphate (CDP-ME2P) to 2-C-methyl-D-erythritol 2,4-cyclodiphosphate (ME-CPP) with a corresponding release of cytidine 5-monophosphate (CMP). The sequence is that of 2-C-methyl-D-erythritol 2,4-cyclodiphosphate synthase from Chlorobaculum parvum (strain DSM 263 / NCIMB 8327) (Chlorobium vibrioforme subsp. thiosulfatophilum).